We begin with the raw amino-acid sequence, 260 residues long: Phosphate import ATP-binding protein PstB (260 aa).

An ABC transporter domain is found at 14–255 (IETENLNLFY…PKNTKTEEYI (242 aa)). 46–53 (GPSGCGKS) serves as a coordination point for ATP.

This sequence belongs to the ABC transporter superfamily. Phosphate importer (TC 3.A.1.7) family. As to quaternary structure, the complex is composed of two ATP-binding proteins (PstB), two transmembrane proteins (PstC and PstA) and a solute-binding protein (PstS).

It localises to the cell inner membrane. It carries out the reaction phosphate(out) + ATP + H2O = ADP + 2 phosphate(in) + H(+). Functionally, part of the ABC transporter complex PstSACB involved in phosphate import. Responsible for energy coupling to the transport system. The chain is Phosphate import ATP-binding protein PstB from Borreliella burgdorferi (strain ATCC 35210 / DSM 4680 / CIP 102532 / B31) (Borrelia burgdorferi).